A 1008-amino-acid polypeptide reads, in one-letter code: Pre-mRNA-splicing factor SNU114 (1008 aa).

S85 carries the post-translational modification Phosphoserine. T88 bears the Phosphothreonine mark. In terms of domain architecture, tr-type G spans 131–338 (ERIINVGVIG…SYYYAHSIPS (208 aa)). A G1 region spans residues 140–147 (GPLHSGKT). 140–147 (GPLHSGKT) serves as a coordination point for GTP. The G2 stretch occupies residues 188 to 192 (GLSIK). The interval 214-217 (DAPG) is G3. GTP is bound by residues 214–218 (DAPGH) and 268–271 (NKLD). The segment at 268-271 (NKLD) is G4. The interval 315–317 (STK) is G5. A disordered region spans residues 504–536 (TSQSESRQKRQLHDISKTETSNEDEDEDDETPS). Residues 509 to 520 (SRQKRQLHDISK) are compositionally biased toward basic and acidic residues. A compositionally biased stretch (acidic residues) spans 524–536 (SNEDEDEDDETPS).

Belongs to the TRAFAC class translation factor GTPase superfamily. Classic translation factor GTPase family. EF-G/EF-2 subfamily. As to quaternary structure, belongs to the CWC complex (or CEF1-associated complex), a spliceosome sub-complex reminiscent of a late-stage spliceosome composed of the U2, U5 and U6 snRNAs and at least BUD13, BUD31, BRR2, CDC40, CEF1, CLF1, CUS1, CWC2, CWC15, CWC21, CWC22, CWC23, CWC24, CWC25, CWC27, ECM2, HSH155, IST3, ISY1, LEA1, MSL1, NTC20, PRP8, PRP9, PRP11, PRP19, PRP21, PRP22, PRP45, PRP46, SLU7, SMB1, SMD1, SMD2, SMD3, SMX2, SMX3, SNT309, SNU114, SPP2, SYF1, SYF2, RSE1 and YJU2. Component of the U4/U6-U5 tri-snRNP complex composed of the U4, U6 and U5 snRNAs and at least PRP3, PRP4, PRP6, PRP8, PRP18, PRP31, PRP38, SNU13, SNU23, SNU66, SNU114, SPP381, SMB1, SMD1, SMD2, SMD3, SMX2, SMX3, LSM2, LSM3, LSM4, LSM5, LSM6, LSM7, LSM8, BRR2 and DIB1. Interacts (via C-terminus) with CWC21. Interacts (via N-terminus) with PRP8 (via SCwid domain).

It localises to the nucleus. In terms of biological role, component of the U5 snRNP complex required for pre-mRNA splicing. Binds GTP. This is Pre-mRNA-splicing factor SNU114 (SNU114) from Saccharomyces cerevisiae (strain ATCC 204508 / S288c) (Baker's yeast).